The primary structure comprises 83 residues: Protein ShK-like4 (83 aa).

The first 21 residues, 1–21 (MDTRVIAVLFVAIMVLSSTNA), serve as a signal peptide directing secretion. The propeptide occupies 22–48 (LPKQKGSYKNMNHADFLKGLDRASSKR). 3 disulfides stabilise this stretch: cysteine 50–cysteine 82, cysteine 57–cysteine 75, and cysteine 67–cysteine 79. The 34-residue stretch at 50–83 (CRDSHWSCFFQSNYEDICSTAQAEECALSCGLCE) folds into the ShKT domain.

In terms of processing, contains 3 disulfide bonds. In terms of tissue distribution, expressed in various neurons (ectodermal sensory cells) (in planulae and primary polyps). Not expressed in nematocytes.

Functionally, probable neuropeptide. The polypeptide is Protein ShK-like4 (Nematostella vectensis (Starlet sea anemone)).